Consider the following 128-residue polypeptide: Sulfurtransferase TusD (128 aa).

Cys78 (cysteine persulfide intermediate) is an active-site residue.

This sequence belongs to the DsrE/TusD family. Heterohexamer, formed by a dimer of trimers. The hexameric TusBCD complex contains 2 copies each of TusB, TusC and TusD. The TusBCD complex interacts with TusE.

It localises to the cytoplasm. Part of a sulfur-relay system required for 2-thiolation of 5-methylaminomethyl-2-thiouridine (mnm(5)s(2)U) at tRNA wobble positions. Accepts sulfur from TusA and transfers it in turn to TusE. The sequence is that of Sulfurtransferase TusD from Escherichia coli O17:K52:H18 (strain UMN026 / ExPEC).